The primary structure comprises 125 residues: Glycine cleavage system H protein (125 aa).

The Lipoyl-binding domain occupies 23–104 (VVYIGITDYA…PYENWILKVK (82 aa)). Position 64 is an N6-lipoyllysine (lysine 64).

It belongs to the GcvH family. As to quaternary structure, the glycine cleavage system is composed of four proteins: P, T, L and H. (R)-lipoate is required as a cofactor.

In terms of biological role, the glycine cleavage system catalyzes the degradation of glycine. The H protein shuttles the methylamine group of glycine from the P protein to the T protein. The protein is Glycine cleavage system H protein of Clostridioides difficile (strain 630) (Peptoclostridium difficile).